The sequence spans 385 residues: DnaJ homolog subfamily C member 28 (385 aa).

One can recognise a J domain in the interval 48 to 132; it reads EYYRLLNLDE…EGKFKYNTPQ (85 aa). A coiled-coil region spans residues 261–318; it reads KEIKDTIEQLREALLMSRKKLGNPLSPTEQKQWAQVCEQFQEKIRKLNKRINDFNLIV.

In terms of biological role, may have a role in protein folding or as a chaperone. This is DnaJ homolog subfamily C member 28 (Dnajc28) from Mus musculus (Mouse).